Here is a 128-residue protein sequence, read N- to C-terminus: Putative pre-16S rRNA nuclease (128 aa).

The protein belongs to the YqgF nuclease family.

It localises to the cytoplasm. In terms of biological role, could be a nuclease involved in processing of the 5'-end of pre-16S rRNA. The polypeptide is Putative pre-16S rRNA nuclease (Campylobacter lari (strain RM2100 / D67 / ATCC BAA-1060)).